We begin with the raw amino-acid sequence, 468 residues long: MSHHSSGLRSSISSTSYRRTFGPPPSLSPGAFSYSSSSRFSSSRLLGSGSPSSSARLGSFRAPRAGALRLPSERLDFSMAEALNQEFLATRSNEKQELQELNDRFANFIEKVRFLEQQNAALRGELSQARGQEPARADQLCQQELRELRRELELLGRERDRVQVERDGLAEDLGALKQRLEEETRKREDAEHNLVLFRKDVDDATLSRLELERKIESLMDEIEFLKKLHEEELRDLQVSVESQQVQQVEVEATVKPELTAALRDIRAQYENIAAKNLQEAEEWYKSKYADLSDAANRNHEALRQAKQEMNESRRQIQSLTCEVDGLRGTNEALLRQLRELEEQFALEAGGYQAGAARLEEELRQLKEEMARHLREYQELLNVKMALDIEIATYRKLLEGEESRISVPVHSFASLSLKTTVPEVEPPQDSHSRKMVLIRTIETRDGEKVVTESQKEQHSELDKSSIHSY.

Residues 1 to 16 (MSHHSSGLRSSISSTS) show a composition bias toward low complexity. Positions 1 to 22 (MSHHSSGLRSSISSTSYRRTFG) are disordered. The head stretch occupies residues 1-96 (MSHHSSGLRS…FLATRSNEKQ (96 aa)). Position 17 is a 3'-nitrotyrosine (tyrosine 17). Residues serine 28, serine 50, and serine 59 each carry the phosphoserine modification. The IF rod domain occupies 94–404 (EKQELQELND…KLLEGEESRI (311 aa)). The tract at residues 97 to 129 (ELQELNDRFANFIEKVRFLEQQNAALRGELSQA) is coil 1A. Residues 130–140 (RGQEPARADQL) are linker 1. The tract at residues 141–236 (CQQELRELRR…KLHEEELRDL (96 aa)) is coil 1B. The segment at 237–259 (QVSVESQQVQQVEVEATVKPELT) is linker 2. The coil 2 stretch occupies residues 260 to 402 (AALRDIRAQY…YRKLLEGEES (143 aa)). At tyrosine 376 the chain carries 3'-nitrotyrosine. The tract at residues 403-468 (RISVPVHSFA…ELDKSSIHSY (66 aa)) is tail. Residues 445-468 (GEKVVTESQKEQHSELDKSSIHSY) form a disordered region. Tyrosine 468 is subject to Phosphotyrosine.

This sequence belongs to the intermediate filament family. As to quaternary structure, forms homodimers (in vitro). Homopolymerizes into a filamentous network (in vitro). Forms heterodimers with NEFL, NEFM or NEFH (in vitro). Interacts with DST (via C-terminus). Interacts with RAB7A; the interaction is direct. Interacts with PRKCE (via phorbol-ester/DAG-type 2 domain). In terms of processing, phosphorylated; phosphorylation increases after nerve injury in regenerating neurons. In terms of tissue distribution, expressed in hypoglossal motor neurons (at protein level). Expressed in the small and large sensory neurons of the dorsal root ganglion (at protein level). Expressed in cutaneous and muscular sensory neurons.

The protein resides in the cytoplasm. The protein localises to the cytoskeleton. Its subcellular location is the cell projection. It is found in the axon. It localises to the perikaryon. Functionally, class-III neuronal intermediate filament protein. My form an independent structural network without the involvement of other neurofilaments or may cooperate with the neuronal intermediate filament proteins NEFL, NEFH, NEFM and INA to form a filamentous network. Assembly of the neuronal intermediate filaments may be regulated by RAB7A. Plays a role in the development of unmyelinated sensory neurons. May be involved in axon elongation and axon regeneration after injury. Inhibits neurite extension in type II spiral ganglion neurons in the cochlea. The chain is Peripherin (Prph) from Rattus norvegicus (Rat).